We begin with the raw amino-acid sequence, 781 residues long: MSVIDSILDKADEQEIKKLNVIVDKIDALEDSMKNLSYEELKDMTAIFKNRLKKGETLDDILPEAFAVVREVSKRKLGMRQYRVQLIGGIVIHQGKIAEMKTGEGKTLVEVAPVYLNALTGKGVHVITVNDYLAERDKELMSPVYESLGMTVGVIISNQDPNIRKQQYKCDITYGTNSEFGFDYLRDNMVPDLSHKVQRELNFAIVDEVDSILIDEARTPLIIAGDGDEDLKLYELANSFVKTVKEEDFELDRKDKTIALTASGISKAESFFGITNLTDIKNIELYHHINQALRGHKLMEKDVDYVISNGEVMIVDEFTGRVMDGRRYTDGLHQAIEAKEGVEIKNESKTMATVTYQNFFRLYEKLSGMTGTAKTEEGEFESIYKLNVVQIPTNRPVIRADLHDKVFKTEEEKYSAVVEEIIRIHKTRQPILVGTVSVEKSEKLSKMLKKQGIKHQVLNAKQHDKEAEIISKAGKLDAITIATNMAGRGTDISLGAGDKEEEQEVKDLGGLYVIGTERHESRRIDNQLRGRSGRQGDPGTSRFFVSLEDDVIKLYGGKTIEKLMKRTSSNENTAIESKALTRAIERAQKGVEGKNFEIRKNVLKYDDTINEQRKVIYNERNKVLNDEDIQEDIQKMVKDIIQEAGETYLIGRKRDYYGYFKHLYSTFMPADTLLIPGVDKKSVQEIIDSTYEISKRVYDLKKMMLGIDKVAELEKTVLLKVVDQYWIDHIDAMEQLKQYIGLKSYAQKDPFKEYALEGYDMFEALNKNIREATVQYLYKFN.

ATP-binding positions include Gln85, 103–107 (GEGKT), and Asp491.

This sequence belongs to the SecA family. As to quaternary structure, monomer and homodimer. Part of the essential Sec protein translocation apparatus which comprises SecA, SecYEG and auxiliary proteins SecDF. Other proteins may also be involved.

The protein resides in the cell membrane. It is found in the cytoplasm. The catalysed reaction is ATP + H2O + cellular proteinSide 1 = ADP + phosphate + cellular proteinSide 2.. In terms of biological role, part of the Sec protein translocase complex. Interacts with the SecYEG preprotein conducting channel. Has a central role in coupling the hydrolysis of ATP to the transfer of proteins into and across the cell membrane, serving as an ATP-driven molecular motor driving the stepwise translocation of polypeptide chains across the membrane. The protein is Protein translocase subunit SecA 2 of Clostridioides difficile (strain 630) (Peptoclostridium difficile).